Here is a 748-residue protein sequence, read N- to C-terminus: MPEQPRRPSDQEQNQSETGPPTNKRRRIGLACNACRSRKSRCDGQRPSCSSCLSLGFDCMYEPGDSATNVIVRKDYVTDLEQRVSSVEHNLQRLNDVLKGHLSPCTNANTSPCHHGTINAGPSMPSPAPTAPTKASAPSGARTGTCATSLEEPQDEEGIPNGMAMTFVEEKTSAFYGEASNINFTQLLLRAIAVAHDSPGAPSGLDRASVLGESVVASVSQSKSSLGGTATPFDSLPTALPSVEEMDTLLDLYFDTAGVVFPFIHEETMRKTYNECRLNGFTRARRTWLGTLNMVFAMASNFDRDYTTSSKKRFERSNIFYKRAMGLCNELSKRVISLEIVHYLILVVLHCQGTSRSVQAWNNYGLVIRSAMALGLHAESTERALNPVQKEYRRRTWVVIYCLDKVLSTAVGRPASIPDEQMMRREPSSGRSPATSGNAADLPGDFLAVSFRMYQVMSKSLVIQYGANLDHDSELDEMAHLKASGELRKQLRLWAANLPPHLQLCDVESDVLLQNTKANRLRVILTMRYHNLSILIHKPLLSATILHLFRQGDAANDASSYLIQLAMAEAHECIRSAQLTIDIVHSVITVDATSKNNLGVWYFTLYYVFTASLVICGRLLWAQHGDTVVDEASASHMRFLLGKAETIFLNLDHENSLVLSCLEYVRRLSRMCGIRETGPDAASASIHDNGSNSTGSADAMSFDLDNMDPFQLFASEMFDPAIFDHFNQSPVDGMSFVNGLWDGFPCGG.

The span at 1 to 10 (MPEQPRRPSD) shows a compositional bias: basic and acidic residues. The disordered stretch occupies residues 1 to 26 (MPEQPRRPSDQEQNQSETGPPTNKRR). A compositionally biased stretch (polar residues) spans 11 to 21 (QEQNQSETGPP). The segment at residues 32-59 (CNACRSRKSRCDGQRPSCSSCLSLGFDC) is a DNA-binding region (zn(2)-C6 fungal-type). Disordered regions lie at residues 116–160 (GTIN…EGIP) and 417–438 (IPDE…TSGN). The span at 131–141 (APTKASAPSGA) shows a compositional bias: low complexity. Polar residues predominate over residues 429–438 (SGRSPATSGN).

The protein localises to the nucleus. Its function is as follows. Transcription factor; part of the Fusarium detoxification of benzoxazolinone cluster 2 (FDB2) involved in the degradation of benzoxazolinones produced by the host plant. Maize, wheat, and rye produce the 2 benzoxazinone phytoanticipins 2,4-dihy-droxy-7-methoxy-1,4-benzoxazin-3-one (DIMBOA) and 2,4-dihydroxy-1,4-benzoxazin-3-one (DIBOA) that, due to their inherent instability once released, spontaneously degrade to the more stable corresponding benzoxazolinones, 6-methoxy-2-benzoxazolinone (MBOA) and 2-benzoxazolinone (BOA), respectively. FDB3 is not essentiel, but contributes to efficient BOA biotransformation. The protein is Transcription factor FBD3 of Gibberella moniliformis (strain M3125 / FGSC 7600) (Maize ear and stalk rot fungus).